The primary structure comprises 138 residues: Probable non-specific lipid-transfer protein 1 (138 aa).

The signal sequence occupies residues 1–36 (MRTVSARSSVALVVIVAAVLVWTSSASVAPAPAPGS). Disulfide bonds link Cys40–Cys88, Cys50–Cys65, Cys66–Cys111, and Cys86–Cys127.

It belongs to the plant LTP family.

Functionally, plant non-specific lipid-transfer proteins transfer phospholipids as well as galactolipids across membranes. May play a role in wax or cutin deposition in the cell walls of expanding epidermal cells and certain secretory tissues. The polypeptide is Probable non-specific lipid-transfer protein 1 (Parietaria judaica (Pellitory-of-the-wall)).